A 411-amino-acid chain; its full sequence is Lissencephaly-1 homolog (411 aa).

The 33-residue stretch at 7-39 (QREELNKAIADYLASNGFMEALESFKKETDMPG) folds into the LisH domain. Residues 54–80 (TSVIRLQKKVMDLEGRLAEAEKEYISG) are a coiled coil. The segment covering 77–89 (YISGTPSREKRSP) has biased composition (basic and acidic residues). The disordered stretch occupies residues 77–96 (YISGTPSREKRSPTEWIPRP). 7 WD repeats span residues 104–145 (GHRA…RTIK), 146–187 (GHTD…RTMH), 188–227 (GHDH…CVRT), 230–269 (GHRD…CKLE), 272–334 (EHDH…ALFT), 337–376 (GHDN…CCKT), and 379–411 (AHSH…WECR).

Belongs to the WD repeat LIS1/nudF family.

It localises to the cytoplasm. Its subcellular location is the cytoskeleton. The protein resides in the microtubule organizing center. The protein localises to the centrosome. Functionally, positively regulates the activity of the minus-end directed microtubule motor protein dynein. May enhance dynein-mediated microtubule sliding by targeting dynein to the microtubule plus end. Required for several dynein- and microtubule-dependent processes. The polypeptide is Lissencephaly-1 homolog (Ixodes scapularis (Black-legged tick)).